The primary structure comprises 92 residues: Small ribosomal subunit protein bS18 (92 aa).

It belongs to the bacterial ribosomal protein bS18 family. As to quaternary structure, part of the 30S ribosomal subunit. Forms a tight heterodimer with protein bS6.

Binds as a heterodimer with protein bS6 to the central domain of the 16S rRNA, where it helps stabilize the platform of the 30S subunit. The sequence is that of Small ribosomal subunit protein bS18 from Cupriavidus necator (strain ATCC 17699 / DSM 428 / KCTC 22496 / NCIMB 10442 / H16 / Stanier 337) (Ralstonia eutropha).